A 69-amino-acid polypeptide reads, in one-letter code: Large ribosomal subunit protein bL32c (69 aa).

The protein belongs to the bacterial ribosomal protein bL32 family.

It localises to the plastid. Its subcellular location is the chloroplast. This chain is Large ribosomal subunit protein bL32c (rpl32), found in Anthoceros angustus (Hornwort).